The primary structure comprises 466 residues: 3-isopropylmalate dehydratase large subunit (466 aa).

Residues C347, C407, and C410 each contribute to the [4Fe-4S] cluster site.

Belongs to the aconitase/IPM isomerase family. LeuC type 1 subfamily. In terms of assembly, heterodimer of LeuC and LeuD. The cofactor is [4Fe-4S] cluster.

It carries out the reaction (2R,3S)-3-isopropylmalate = (2S)-2-isopropylmalate. It functions in the pathway amino-acid biosynthesis; L-leucine biosynthesis; L-leucine from 3-methyl-2-oxobutanoate: step 2/4. Functionally, catalyzes the isomerization between 2-isopropylmalate and 3-isopropylmalate, via the formation of 2-isopropylmaleate. This is 3-isopropylmalate dehydratase large subunit from Vibrio campbellii (strain ATCC BAA-1116).